The primary structure comprises 347 residues: sn-glycerol-3-phosphate import ATP-binding protein UgpC 1 (347 aa).

One can recognise an ABC transporter domain in the interval 4 to 234; it reads IELIDLKKNY…PETVFVAGFI (231 aa). 36–43 is a binding site for ATP; the sequence is GPSGCGKS.

Belongs to the ABC transporter superfamily. sn-glycerol-3-phosphate importer (TC 3.A.1.1.3) family. The complex is composed of two ATP-binding proteins (UgpC), two transmembrane proteins (UgpA and UgpE) and a solute-binding protein (UgpB).

The protein resides in the cell inner membrane. It catalyses the reaction sn-glycerol 3-phosphate(out) + ATP + H2O = sn-glycerol 3-phosphate(in) + ADP + phosphate + H(+). In terms of biological role, part of the ABC transporter complex UgpBAEC involved in sn-glycerol-3-phosphate (G3P) import. Responsible for energy coupling to the transport system. The polypeptide is sn-glycerol-3-phosphate import ATP-binding protein UgpC 1 (Rhizobium etli (strain ATCC 51251 / DSM 11541 / JCM 21823 / NBRC 15573 / CFN 42)).